Consider the following 372-residue polypeptide: MKKKDYYEVLGVSKTASEQEIRQAYRKLAKQYHPDLNKSPDAHDKMVEINEAADVLLDKDKRKQYDQFGHRAFDNSSGFSSNFTDFEDLFSNMGSSGFSSFTNIFSDFFGSNKSDYQRSTKGQSVSIDIYLTFKELLFGVDKIIELDLLTNCSACFGSGAESNSDINICNNCHGTGEVLVQKNMGFFQFQQSAKCNVCNGAGKIIKNKCKNCKGKGKYLERKKIEVNIPKGIRPNQQIKLSQKGHASTNNGVNGDLIIDIYLKESKVFEIINNNDILMTYNISYLDSILGNEIIIKTLDGDIKYKLPKSINSNEAIIINNKGLYKSINKDKRGDLIIKVNIVVPKNLTKKEKELIEQIYEQTSFNPENNINQ.

A J domain is found at 5–69 (DYYEVLGVSK…DKRKQYDQFG (65 aa)). The CR-type zinc-finger motif lies at 139–221 (GVDKIIELDL…CKGKGKYLER (83 aa)). Zn(2+) contacts are provided by cysteine 152, cysteine 155, cysteine 169, cysteine 172, cysteine 195, cysteine 198, cysteine 209, and cysteine 212. CXXCXGXG motif repeat units follow at residues 152 to 159 (CSACFGSG), 169 to 176 (CNNCHGTG), 195 to 202 (CNVCNGAG), and 209 to 216 (CKNCKGKG).

Belongs to the DnaJ family. As to quaternary structure, homodimer. Requires Zn(2+) as cofactor.

The protein resides in the cytoplasm. In terms of biological role, participates actively in the response to hyperosmotic and heat shock by preventing the aggregation of stress-denatured proteins and by disaggregating proteins, also in an autonomous, DnaK-independent fashion. Unfolded proteins bind initially to DnaJ; upon interaction with the DnaJ-bound protein, DnaK hydrolyzes its bound ATP, resulting in the formation of a stable complex. GrpE releases ADP from DnaK; ATP binding to DnaK triggers the release of the substrate protein, thus completing the reaction cycle. Several rounds of ATP-dependent interactions between DnaJ, DnaK and GrpE are required for fully efficient folding. Also involved, together with DnaK and GrpE, in the DNA replication of plasmids through activation of initiation proteins. This chain is Chaperone protein DnaJ, found in Mycoplasma capricolum subsp. capricolum (strain California kid / ATCC 27343 / NCTC 10154).